The primary structure comprises 57 residues: Small ribosomal subunit protein eS27 (57 aa).

Zn(2+)-binding residues include C10, C13, C29, and C32. The segment at 10–32 adopts a C4-type zinc-finger fold; that stretch reads CPDCENEQTVFGKASTEVACAVC.

The protein belongs to the eukaryotic ribosomal protein eS27 family. As to quaternary structure, part of the 30S ribosomal subunit. Zn(2+) serves as cofactor.

The polypeptide is Small ribosomal subunit protein eS27 (Halobacterium salinarum (strain ATCC 29341 / DSM 671 / R1)).